We begin with the raw amino-acid sequence, 367 residues long: DNA replication and repair protein RecF (367 aa).

An ATP-binding site is contributed by 30-37; sequence GANGSGKT.

It belongs to the RecF family.

The protein resides in the cytoplasm. Functionally, the RecF protein is involved in DNA metabolism; it is required for DNA replication and normal SOS inducibility. RecF binds preferentially to single-stranded, linear DNA. It also seems to bind ATP. The polypeptide is DNA replication and repair protein RecF (Pseudomonas putida (strain W619)).